Here is a 305-residue protein sequence, read N- to C-terminus: NAD kinase 2 (305 aa).

Aspartate 78 acts as the Proton acceptor in catalysis. Residues 78–79, 152–153, aspartate 182, 193–198, and asparagine 251 each bind NAD(+); these read DG, NE, and TAYSLS.

It belongs to the NAD kinase family. The cofactor is a divalent metal cation.

The protein localises to the cytoplasm. The enzyme catalyses NAD(+) + ATP = ADP + NADP(+) + H(+). Functionally, involved in the regulation of the intracellular balance of NAD and NADP, and is a key enzyme in the biosynthesis of NADP. Catalyzes specifically the phosphorylation on 2'-hydroxyl of the adenosine moiety of NAD to yield NADP. This chain is NAD kinase 2, found in Trichormus variabilis (strain ATCC 29413 / PCC 7937) (Anabaena variabilis).